A 1041-amino-acid polypeptide reads, in one-letter code: Beta-galactosidase (1041 aa).

Substrate contacts are provided by Asn-103 and Asp-201. Asp-201 contacts Na(+). Glu-415, His-417, and Glu-460 together coordinate Mg(2+). Substrate contacts are provided by residues Glu-460 and 536–539 (EYAH). Catalysis depends on Glu-460, which acts as the Proton donor. Glu-536 acts as the Nucleophile in catalysis. Asn-596 provides a ligand contact to Mg(2+). Positions 600 and 603 each coordinate Na(+). Residues Asn-603 and Trp-1016 each coordinate substrate.

This sequence belongs to the glycosyl hydrolase 2 family. Homotetramer. Mg(2+) serves as cofactor. The cofactor is Na(+).

It carries out the reaction Hydrolysis of terminal non-reducing beta-D-galactose residues in beta-D-galactosides.. This chain is Beta-galactosidase, found in Alteromonas mediterranea (strain DSM 17117 / CIP 110805 / LMG 28347 / Deep ecotype).